Reading from the N-terminus, the 92-residue chain is Small ribosomal subunit protein uS19 (92 aa).

This sequence belongs to the universal ribosomal protein uS19 family.

Functionally, protein S19 forms a complex with S13 that binds strongly to the 16S ribosomal RNA. The protein is Small ribosomal subunit protein uS19 of Aliivibrio salmonicida (strain LFI1238) (Vibrio salmonicida (strain LFI1238)).